We begin with the raw amino-acid sequence, 294 residues long: Shikimate dehydrogenase (NADP(+)) (294 aa).

Residues 23–25 (SRS) and T70 contribute to the shikimate site. The active-site Proton acceptor is the K74. 2 residues coordinate shikimate: N95 and D110. NADP(+) is bound by residues 135–139 (GAGGA), 159–164 (NRTASR), and M232. A shikimate-binding site is contributed by Y234. NADP(+) is bound at residue G255.

Belongs to the shikimate dehydrogenase family. In terms of assembly, homodimer.

The enzyme catalyses shikimate + NADP(+) = 3-dehydroshikimate + NADPH + H(+). The protein operates within metabolic intermediate biosynthesis; chorismate biosynthesis; chorismate from D-erythrose 4-phosphate and phosphoenolpyruvate: step 4/7. Involved in the biosynthesis of the chorismate, which leads to the biosynthesis of aromatic amino acids. Catalyzes the reversible NADPH linked reduction of 3-dehydroshikimate (DHSA) to yield shikimate (SA). This chain is Shikimate dehydrogenase (NADP(+)), found in Cupriavidus pinatubonensis (strain JMP 134 / LMG 1197) (Cupriavidus necator (strain JMP 134)).